Consider the following 369-residue polypeptide: MSATGREPTPATSPGDLAGSLREAAFVRLVSDATGEALAATGLLARALDDTPFQASVVRPFEDPDRTTETDITIAIGRTQLTADVTLTDRAAATAFETARELGTADPALALAGTIAAGDVDGTVAEAAEQAGLDQRPGVAVPGTDLADGLAHSTLFVAPFSGDADEARATLAELDISPDGPPSADDHRRLASLVALTVTTDAPPRAADAVQRALRPTAGGPFETVGGYADVLDAVAREQPGTAVALALGHEAVSEDALAAWRSHATRAHDAVSEATTGRYDGLFVARGDAMPTGTVARLFADYRAPEPVTLVVTDDRAAARATDGRDVAETMHAAAETVGGDAVGTGDRARARFDVSTADFIEAFREAV.

This is an uncharacterized protein from Haloarcula marismortui (strain ATCC 43049 / DSM 3752 / JCM 8966 / VKM B-1809) (Halobacterium marismortui).